The following is a 263-amino-acid chain: Purine nucleoside phosphorylase SAV1187 (263 aa).

3 residues coordinate Zn(2+): His-79, Cys-124, and His-141.

This sequence belongs to the purine nucleoside phosphorylase YfiH/LACC1 family. In terms of assembly, homodimer. It depends on Cu(2+) as a cofactor. Zn(2+) is required as a cofactor.

The catalysed reaction is adenosine + phosphate = alpha-D-ribose 1-phosphate + adenine. The enzyme catalyses S-methyl-5'-thioadenosine + phosphate = 5-(methylsulfanyl)-alpha-D-ribose 1-phosphate + adenine. It catalyses the reaction inosine + phosphate = alpha-D-ribose 1-phosphate + hypoxanthine. It carries out the reaction adenosine + H2O + H(+) = inosine + NH4(+). Its function is as follows. Purine nucleoside enzyme that catalyzes the phosphorolysis of adenosine and inosine nucleosides, yielding D-ribose 1-phosphate and the respective free bases, adenine and hypoxanthine. Also catalyzes the phosphorolysis of S-methyl-5'-thioadenosine into adenine and S-methyl-5-thio-alpha-D-ribose 1-phosphate. Also has adenosine deaminase activity. The chain is Purine nucleoside phosphorylase SAV1187 from Staphylococcus aureus (strain Mu50 / ATCC 700699).